A 201-amino-acid chain; its full sequence is Rho GDP-dissociation inhibitor 2 (201 aa).

The disordered stretch occupies residues 1–38 (MTEKAPEPHVEEDDDDELDSKLNYKPPPQKSLKELQEM). Thr-2 is modified (N-acetylthreonine). At Lys-21 the chain carries N6-acetyllysine. Phosphotyrosine is present on Tyr-24. An N6-acetyllysine mark is found at Lys-25, Lys-40, Lys-47, Lys-102, and Lys-124. Ser-145 is subject to Phosphoserine. N6-acetyllysine is present on Lys-175.

Belongs to the Rho GDI family. Interacts with RHOA. Interacts with RAC1. Interacts with RAC2. Interacts with CDC42. As to expression, detected in bone marrow, thymus and spleen.

The protein localises to the cytoplasm. It localises to the cytosol. In terms of biological role, regulates the GDP/GTP exchange reaction of the Rho proteins by inhibiting the dissociation of GDP from them, and the subsequent binding of GTP to them. Regulates reorganization of the actin cytoskeleton mediated by Rho family members. The chain is Rho GDP-dissociation inhibitor 2 (ARHGDIB) from Homo sapiens (Human).